The chain runs to 472 residues: Ribosomal protein uS12 methylthiotransferase RimO (472 aa).

In terms of domain architecture, MTTase N-terminal spans 33-143; it reads NRIGFVSLGC…VLKHVHKYVP (111 aa). [4Fe-4S] cluster contacts are provided by Cys-42, Cys-78, Cys-107, Cys-175, Cys-179, and Cys-182. Residues 161-398 form the Radical SAM core domain; that stretch reads LTPKHYAYLK…MELQAEISAE (238 aa). The 67-residue stretch at 401–467 folds into the TRAM domain; the sequence is ARFVGRTLDI…EHDLWAEVVD (67 aa).

It belongs to the methylthiotransferase family. RimO subfamily. [4Fe-4S] cluster serves as cofactor.

The protein resides in the cytoplasm. The enzyme catalyses L-aspartate(89)-[ribosomal protein uS12]-hydrogen + (sulfur carrier)-SH + AH2 + 2 S-adenosyl-L-methionine = 3-methylsulfanyl-L-aspartate(89)-[ribosomal protein uS12]-hydrogen + (sulfur carrier)-H + 5'-deoxyadenosine + L-methionine + A + S-adenosyl-L-homocysteine + 2 H(+). Functionally, catalyzes the methylthiolation of an aspartic acid residue of ribosomal protein uS12. This Shewanella putrefaciens (strain CN-32 / ATCC BAA-453) protein is Ribosomal protein uS12 methylthiotransferase RimO.